Consider the following 157-residue polypeptide: MGGGGDHQQLSIKQYCLYFIIGIAYTDCFICALCKNLRLSTTMKLFVLLSILVWLAQPVLNRPLSIFYTKQILPRTYTPPMRELEYWCTYGKHCDFCWDCKNGICKNKVLDDMPLIVQNDYISKCSITRFIDRCMYFIEPKIPYIHYMNCSLPTYFS.

The next 2 helical transmembrane spans lie at 14-34 and 39-59; these read QYCL…CALC and LSTT…AQPV.

This sequence belongs to the asfivirus MGF 110 family.

It is found in the host membrane. Plays a role in virus cell tropism, and may be required for efficient virus replication in macrophages. The chain is Protein MGF 110-13L from African swine fever virus (isolate Tick/Malawi/Lil 20-1/1983) (ASFV).